Reading from the N-terminus, the 157-residue chain is UPF0262 protein Avi_0642 (157 aa).

It belongs to the UPF0262 family.

In Allorhizobium ampelinum (strain ATCC BAA-846 / DSM 112012 / S4) (Agrobacterium vitis (strain S4)), this protein is UPF0262 protein Avi_0642.